A 206-amino-acid chain; its full sequence is Large ribosomal subunit protein uL4 (206 aa).

A disordered region spans residues 63 to 97 (MYKQKGTGRARHHSARAPQFRGGGKAHGPVVRSHE). Over residues 64–77 (YKQKGTGRARHHSA) the composition is skewed to basic residues.

It belongs to the universal ribosomal protein uL4 family. In terms of assembly, part of the 50S ribosomal subunit.

Functionally, one of the primary rRNA binding proteins, this protein initially binds near the 5'-end of the 23S rRNA. It is important during the early stages of 50S assembly. It makes multiple contacts with different domains of the 23S rRNA in the assembled 50S subunit and ribosome. Its function is as follows. Forms part of the polypeptide exit tunnel. The chain is Large ribosomal subunit protein uL4 from Rhizobium etli (strain ATCC 51251 / DSM 11541 / JCM 21823 / NBRC 15573 / CFN 42).